Here is a 298-residue protein sequence, read N- to C-terminus: GTP cyclohydrolase FolE2 (298 aa).

Belongs to the GTP cyclohydrolase IV family.

It carries out the reaction GTP + H2O = 7,8-dihydroneopterin 3'-triphosphate + formate + H(+). The protein operates within cofactor biosynthesis; 7,8-dihydroneopterin triphosphate biosynthesis; 7,8-dihydroneopterin triphosphate from GTP: step 1/1. Converts GTP to 7,8-dihydroneopterin triphosphate. This is GTP cyclohydrolase FolE2 from Xylella fastidiosa (strain M23).